The sequence spans 145 residues: D-aminoacyl-tRNA deacylase (145 aa).

The short motif at 137–138 is the Gly-cisPro motif, important for rejection of L-amino acids element; the sequence is GP.

The protein belongs to the DTD family. As to quaternary structure, homodimer.

It is found in the cytoplasm. The enzyme catalyses glycyl-tRNA(Ala) + H2O = tRNA(Ala) + glycine + H(+). It carries out the reaction a D-aminoacyl-tRNA + H2O = a tRNA + a D-alpha-amino acid + H(+). Functionally, an aminoacyl-tRNA editing enzyme that deacylates mischarged D-aminoacyl-tRNAs. Also deacylates mischarged glycyl-tRNA(Ala), protecting cells against glycine mischarging by AlaRS. Acts via tRNA-based rather than protein-based catalysis; rejects L-amino acids rather than detecting D-amino acids in the active site. By recycling D-aminoacyl-tRNA to D-amino acids and free tRNA molecules, this enzyme counteracts the toxicity associated with the formation of D-aminoacyl-tRNA entities in vivo and helps enforce protein L-homochirality. The chain is D-aminoacyl-tRNA deacylase from Francisella tularensis subsp. holarctica (strain FTNF002-00 / FTA).